A 303-amino-acid chain; its full sequence is Methionyl-tRNA formyltransferase (303 aa).

110–113 (SLLP) provides a ligand contact to (6S)-5,6,7,8-tetrahydrofolate.

The protein belongs to the Fmt family.

It catalyses the reaction L-methionyl-tRNA(fMet) + (6R)-10-formyltetrahydrofolate = N-formyl-L-methionyl-tRNA(fMet) + (6S)-5,6,7,8-tetrahydrofolate + H(+). Attaches a formyl group to the free amino group of methionyl-tRNA(fMet). The formyl group appears to play a dual role in the initiator identity of N-formylmethionyl-tRNA by promoting its recognition by IF2 and preventing the misappropriation of this tRNA by the elongation apparatus. This chain is Methionyl-tRNA formyltransferase, found in Ehrlichia ruminantium (strain Gardel).